The sequence spans 417 residues: MFDPESLKKLAIEIVKKSIEAVFPDRAVKETLPKLNLDRVILVAVGKAAWRMAKAAYEVLGKKIRKGVVVTKYGHSEGPIDDFEIYEAGHPVPDENTIKTTRRVLELVDQLNENDTVLFLLSGGGSSLFELPLEGVSLEEIQKLTSALLKSGASIEEINTVRKHLSQVKGGRFAERVFPAKVVALVLSDVLGDRLDVIASGPAWPDSSTSEDALKVLEKYGIETSESVKRAILQETPKHLSNVEIHLIGNVQKVCDEAKSLAKEKGFNAEIITTSLDCEAREAGRFIASIMKEVKFKDRPLKKPAALIFGGETVVHVKGNGIGGRNQELALSAAIALEGIEGVILCSAGTDGTDGPTDAAGGIVDGSTAKTLKAMGEDPYQYLKNNDSYNALKKSGALLITGPTGTNVNDLIIGLIV.

This sequence belongs to the glycerate kinase type-1 family. Homodimer. Mg(2+) is required as a cofactor.

The enzyme catalyses (R)-glycerate + ATP = (2R)-2-phosphoglycerate + ADP + H(+). In terms of biological role, involved in the degradation of serine via 3-hydroxypyruvate. Catalyzes the ATP-dependent phosphorylation of D-glycerate to 2-phosphoglycerate. This Thermotoga maritima (strain ATCC 43589 / DSM 3109 / JCM 10099 / NBRC 100826 / MSB8) protein is D-glycerate 2-kinase.